We begin with the raw amino-acid sequence, 599 residues long: MKNIRNFSIIAHIDHGKSTLSDRIIQICGGLSDREMEAQVLDSMDLERERGITIKAQSVTLDYKASDGETYQLNFIDTPGHVDFSYEVSRSLAACEGALLVVDAGQGVEAQTLANCYTAMEMDLEVVPVLNKIDLPAADPERVAEEIEDIVGIDATDAVRCSAKTGVGVQDVLERLVRDIPPPEGDPEGPLQALIIDSWFDNYLGVVSLIRIKNGTLRKGDKVKVMSTGQTYNADRLGIFTPKQVDRTELKCGEVGWLVCAIKDIHGAPVGDTLTLARNPAEKALPGFKKVKPQVYAGLFPVSSDDYEAFRDALGKLSLNDASLFYEPESSSALGFGFRCGFLGLLHMEIIQERLEREYDLDLITTAPTVVYEVETTSREVIYVDSPSKLPAVNNIYELREPIAECHMLLPQAYLGNVITLCVEKRGVQTNMVYHGNQVALTYEIPMAEVVLDFFDRLKSTSRGYASLDYNFKRFQASDMVRVDVLINGERVDALALITHRDNSQNRGRELVEKMKDLIPRQQFDIAIQAAIGTHIIARSTVKQLRKNVLAKCYGGDISRKKKLLQKQKEGKKRMKQIGNVELPQEAFLAILHVGKDNK.

The tr-type G domain maps to K2–E184. GTP-binding positions include D14 to T19 and N131 to D134.

It belongs to the TRAFAC class translation factor GTPase superfamily. Classic translation factor GTPase family. LepA subfamily.

It localises to the cell inner membrane. The catalysed reaction is GTP + H2O = GDP + phosphate + H(+). In terms of biological role, required for accurate and efficient protein synthesis under certain stress conditions. May act as a fidelity factor of the translation reaction, by catalyzing a one-codon backward translocation of tRNAs on improperly translocated ribosomes. Back-translocation proceeds from a post-translocation (POST) complex to a pre-translocation (PRE) complex, thus giving elongation factor G a second chance to translocate the tRNAs correctly. Binds to ribosomes in a GTP-dependent manner. This Escherichia fergusonii (strain ATCC 35469 / DSM 13698 / CCUG 18766 / IAM 14443 / JCM 21226 / LMG 7866 / NBRC 102419 / NCTC 12128 / CDC 0568-73) protein is Elongation factor 4.